Here is a 512-residue protein sequence, read N- to C-terminus: 2,3-bisphosphoglycerate-independent phosphoglycerate mutase (512 aa).

Mn(2+)-binding residues include aspartate 12 and serine 62. The active-site Phosphoserine intermediate is serine 62. Residues histidine 123, arginine 153 to aspartate 154, arginine 185, arginine 191, arginine 260 to arginine 263, and lysine 333 each bind substrate. Residues aspartate 400, histidine 404, aspartate 441, histidine 442, and histidine 460 each contribute to the Mn(2+) site.

The protein belongs to the BPG-independent phosphoglycerate mutase family. In terms of assembly, monomer. It depends on Mn(2+) as a cofactor.

It catalyses the reaction (2R)-2-phosphoglycerate = (2R)-3-phosphoglycerate. It participates in carbohydrate degradation; glycolysis; pyruvate from D-glyceraldehyde 3-phosphate: step 3/5. Functionally, catalyzes the interconversion of 2-phosphoglycerate and 3-phosphoglycerate. This chain is 2,3-bisphosphoglycerate-independent phosphoglycerate mutase, found in Clostridium perfringens (strain SM101 / Type A).